A 483-amino-acid chain; its full sequence is MTTALEEQNAQQAATAGRVVRVIGAVVDVEFPRGELPALYNALTVEVTLESVKKTVVLEVAQHLGDNLIRTIAMAPTDGLVRGAAVTDTARPISVPVGDVVKGHVFNALGDCLDDVSLNNNPEIERWGIHREPPSFDQLEGKTEILETGIKVIDLLTPYVKGGKIGLFGGAGVGKTVLIQEMITRIAREFSGTSVFAGVGERTREGTDLFLEMEEMGVLQDTALVFGQMDEPPGVRMRVALSGLTMAEYFRDVQNQDVLLFIDNIFRFTQAGSEVSTLLGRMPSAVGYQPTLADEMGVLQERITSTKGRSITSLQAVYVPADDYTDPAPATTFAHLDATTELDRSIASKGIYPAVNPLTSTSRILEPAIVGERHYEVSQRVIGILQKNKELQDIIAILGMDELSEEDKITVARARRIERFLGQNFFVAEKFTGLPGSYVPLTDTVDAFERICNGDFDHYPEQAFNGLGGLDDVEAAYKKLTGK.

ATP is bound at residue 169 to 176; sequence GGAGVGKT.

This sequence belongs to the ATPase alpha/beta chains family. As to quaternary structure, F-type ATPases have 2 components, CF(1) - the catalytic core - and CF(0) - the membrane proton channel. CF(1) has five subunits: alpha(3), beta(3), gamma(1), delta(1), epsilon(1). CF(0) has three main subunits: a(1), b(2) and c(9-12). The alpha and beta chains form an alternating ring which encloses part of the gamma chain. CF(1) is attached to CF(0) by a central stalk formed by the gamma and epsilon chains, while a peripheral stalk is formed by the delta and b chains.

The protein localises to the cell membrane. The catalysed reaction is ATP + H2O + 4 H(+)(in) = ADP + phosphate + 5 H(+)(out). Produces ATP from ADP in the presence of a proton gradient across the membrane. The catalytic sites are hosted primarily by the beta subunits. This chain is ATP synthase subunit beta, found in Corynebacterium glutamicum (strain R).